The chain runs to 489 residues: L-asparagine permease 1 (489 aa).

12 consecutive transmembrane segments (helical) span residues 25–45 (QLQMIGIGGAIGTGLFLGASG), 49–69 (KAGPGLFLVYGVCGVFVFLIL), 100–120 (AVGWMYFLHWAMTSIVDTTAI), 137–157 (ILALIALTVVLSMNLISVEWF), 162–182 (FWAALIKVLALMAFLVVGTVF), 210–230 (WLPLLIVTSGVVFAYSAVELV), 255–275 (IAIFYVGSVALLALLLPYTAY), 289–309 (IGFHGAGDLMNIVVLTAALSS), 344–364 (YGGIVLTAVITLFGVALNAFK), 369–389 (FEIVLNMSALGIIAGWATIVL), 413–433 (SPYSGYLTLLFLLVVLVTMAS), and 439–459 (TWTVATLIIVIPALTAGWYLV).

This sequence belongs to the amino acid-polyamine-organocation (APC) superfamily. Amino acid transporter (AAT) (TC 2.A.3.1) family.

It is found in the cell membrane. This chain is L-asparagine permease 1 (ansP1), found in Mycobacterium bovis (strain ATCC BAA-935 / AF2122/97).